We begin with the raw amino-acid sequence, 196 residues long: Putative NADH dehydrogenase/NAD(P)H nitroreductase Reut_A1586 (196 aa).

This sequence belongs to the nitroreductase family. HadB/RutE subfamily. It depends on FMN as a cofactor.

This Cupriavidus pinatubonensis (strain JMP 134 / LMG 1197) (Cupriavidus necator (strain JMP 134)) protein is Putative NADH dehydrogenase/NAD(P)H nitroreductase Reut_A1586.